We begin with the raw amino-acid sequence, 276 residues long: F-box/LRR-repeat protein 20 (276 aa).

Residues 22–68 form the F-box domain; that stretch reads AVINKKLPKELLLRIFSFLDVVTLCRCAQVSRAWNVLALDGSNWQRI. LRR repeat units follow at residues 74-100, 101-126, 127-152, 153-178, 179-204, 205-230, 231-256, and 257-276; these read QRDIEGRVVENISKRCGGFLRKLSLRG, CLGVGDNALRTFAQNCRNIEVLSLNG, CTKTTDATCTSLSKFCSKLRHLDLAS, CTSITNMSLKALSEGCPLLEQLNISW, CDQVTKDGIQALVRGCGGLKALFLKG, CTQLEDEALKYIGAHCPELVTLNLQT, CLQITDEGLITICRGCHKLQSLCASG, and CSNITDAILNALGQNCPRLR.

In terms of assembly, interacts with SKP1 and CUL1. In terms of tissue distribution, widely expressed, with highest expression in skeletal muscle, heart and brain.

Its subcellular location is the cytoplasm. Substrate-recognition component of the SCF (SKP1-CUL1-F-box protein)-type E3 ubiquitin ligase complex. Role in neural transmission. The protein is F-box/LRR-repeat protein 20 (Fbxl20) of Rattus norvegicus (Rat).